Here is a 213-residue protein sequence, read N- to C-terminus: StAR-related lipid transfer protein 5 (213 aa).

Residues 1–213 form the START domain; it reads MDPALAAQMS…LQKAVKQFHE (213 aa).

Its function is as follows. May be involved in the intracellular transport of sterols or other lipids. May bind cholesterol or other sterols. The chain is StAR-related lipid transfer protein 5 (STARD5) from Pongo abelii (Sumatran orangutan).